The sequence spans 156 residues: Ribosomal RNA large subunit methyltransferase H (156 aa).

S-adenosyl-L-methionine is bound by residues leucine 73, glycine 104, and 123 to 128; that span reads LSPLTL.

Belongs to the RNA methyltransferase RlmH family. As to quaternary structure, homodimer.

It localises to the cytoplasm. The enzyme catalyses pseudouridine(1915) in 23S rRNA + S-adenosyl-L-methionine = N(3)-methylpseudouridine(1915) in 23S rRNA + S-adenosyl-L-homocysteine + H(+). Specifically methylates the pseudouridine at position 1915 (m3Psi1915) in 23S rRNA. The sequence is that of Ribosomal RNA large subunit methyltransferase H from Edwardsiella ictaluri (strain 93-146).